A 365-amino-acid chain; its full sequence is DNA N6-methyl methyltransferase (365 aa).

Belongs to the MT-A70-like family.

The catalysed reaction is a 2'-deoxyadenosine in DNA + S-adenosyl-L-methionine = an N(6)-methyl-2'-deoxyadenosine in DNA + S-adenosyl-L-homocysteine + H(+). Its function is as follows. Methylates DNA on the 6th position of adenine (N(6)-methyladenosine). N(6)-methyladenosine (m6A) DNA is involved in epigenetic transgenerational inheritance. The protein is DNA N6-methyl methyltransferase of Caenorhabditis elegans.